Reading from the N-terminus, the 82-residue chain is Large ribosomal subunit protein bL28 (82 aa).

Belongs to the bacterial ribosomal protein bL28 family.

The protein is Large ribosomal subunit protein bL28 of Vesicomyosocius okutanii subsp. Calyptogena okutanii (strain HA).